Reading from the N-terminus, the 879-residue chain is Metabotropic glutamate receptor 3 (879 aa).

A signal peptide spans 1 to 22; the sequence is MKMLTRLQVLTLALFSKGFLLS. Over 23–576 the chain is Extracellular; that stretch reads LGDHNFLRRE…EDYIRWEDAW (554 aa). A disulfide bridge connects residues cysteine 57 and cysteine 99. Residues serine 151 and 172-174 each bind L-glutamate; that span reads AST. Asparagine 209 carries N-linked (GlcNAc...) asparagine glycosylation. L-glutamate is bound at residue tyrosine 222. 7 disulfide bridges follow: cysteine 240-cysteine 527, cysteine 361-cysteine 373, cysteine 412-cysteine 419, cysteine 509-cysteine 528, cysteine 513-cysteine 531, cysteine 534-cysteine 546, and cysteine 549-cysteine 562. N-linked (GlcNAc...) asparagine glycosylation occurs at asparagine 292. Aspartate 301 contributes to the L-glutamate binding site. An L-glutamate-binding site is contributed by lysine 389. N-linked (GlcNAc...) asparagine glycans are attached at residues asparagine 414 and asparagine 439. A helical transmembrane segment spans residues 577-599; sequence AIGPVTIACLGFMCTCMVVTVFI. Residues 600 to 613 are Cytoplasmic-facing; that stretch reads KHNNTPLVKASGRE. A helical membrane pass occupies residues 614 to 634; that stretch reads LCYILLFGVGLSYCMTFFFIA. The Extracellular segment spans residues 635–645; the sequence is KPSPVICALRR. The chain crosses the membrane as a helical span at residues 646–664; sequence LGLGSSFAICYSALLTKTN. At 665–688 the chain is on the cytoplasmic side; the sequence is CIARIFDGVKNGAQRPKFISPSSQ. The chain crosses the membrane as a helical span at residues 689 to 709; the sequence is VFICLGLILVQIVMVSVWLIL. The Extracellular segment spans residues 710 to 734; the sequence is EAPGTRRYTLAEKRETVILKCNVKD. A helical membrane pass occupies residues 735-756; the sequence is SSMLISLTYDVILVILCTVYAF. At 757 to 769 the chain is on the cytoplasmic side; it reads KTRKCPENFNEAK. A helical membrane pass occupies residues 770-792; the sequence is FIGFTMYTTCIIWLAFLPIFYVT. The Extracellular segment spans residues 793-802; that stretch reads SSDYRVQTTT. Residues 803–828 form a helical membrane-spanning segment; the sequence is MCISVSLSGFVVLGCLFAPKVHIILF. Over 829–879 the chain is Cytoplasmic; that stretch reads QPQKNVVTHRLHLNRFSVSGTGTTYSQSSASTYVPTVCNGREVLDSTTSSL.

This sequence belongs to the G-protein coupled receptor 3 family. As to quaternary structure, interacts with TAMALIN. As to expression, detected in brain cortex, thalamus, subthalamic nucleus, substantia nigra, hypothalamus, hippocampus, corpus callosum, caudate nucleus and amygdala.

The protein resides in the cell membrane. Functionally, G-protein coupled receptor for glutamate. Ligand binding causes a conformation change that triggers signaling via guanine nucleotide-binding proteins (G proteins) and modulates the activity of down-stream effectors. Signaling inhibits adenylate cyclase activity. The protein is Metabotropic glutamate receptor 3 (GRM3) of Homo sapiens (Human).